A 386-amino-acid polypeptide reads, in one-letter code: Enoyl-[acyl-carrier-protein] reductase 1, mitochondrial (386 aa).

A mitochondrion-targeting transit peptide spans 1–22 (MYSVLKQSIRPRLLATHNQFRT). Catalysis depends on tyrosine 79, which acts as the Proton donor. Residues asparagine 172, 199-202 (TSAV), 222-224 (RDR), 296-299 (YGGM), 321-323 (FWV), and lysine 381 contribute to the NADP(+) site.

The protein belongs to the zinc-containing alcohol dehydrogenase family. Quinone oxidoreductase subfamily. Homodimer and heterodimer with ETR2.

The protein localises to the mitochondrion. The enzyme catalyses a 2,3-saturated acyl-[ACP] + NADP(+) = a (2E)-enoyl-[ACP] + NADPH + H(+). The catalysed reaction is (2E,4E)-hexadienoyl-CoA + NADPH + H(+) = (4E)-hexenoyl-CoA + NADP(+). It catalyses the reaction (2E)-hexenoyl-CoA + NADPH + H(+) = hexanoyl-CoA + NADP(+). Its function is as follows. Catalyzes the NADPH-dependent reduction of trans-2-enoyl thioesters in mitochondrial fatty acid synthesis (fatty acid synthesis type II). Fatty acid chain elongation in mitochondria uses acyl carrier protein (ACP) as an acyl group carrier, but the enzyme accepts both ACP and CoA thioesters as substrates in vitro. Required for respiration and the maintenance of the mitochondrial compartment. The protein is Enoyl-[acyl-carrier-protein] reductase 1, mitochondrial (ETR1) of Candida tropicalis (Yeast).